The primary structure comprises 469 residues: Solute carrier family 52, riboflavin transporter, member 3 (469 aa).

Topologically, residues 1-2 are cytoplasmic; the sequence is MA. Residues 3–23 form a helical membrane-spanning segment; the sequence is FLMHLLVCVFGMGSWVTINGL. Residues 24-43 are Extracellular-facing; that stretch reads WVELPLLVMELPEGWYLPSY. Residues 44–64 traverse the membrane as a helical segment; it reads LTVVIQLANIGPLLVTLLHHF. The Cytoplasmic portion of the chain corresponds to 65–71; that stretch reads RPSCLSE. The helical transmembrane segment at 72–92 threads the bilayer; that stretch reads VPIIFTLLGVGTVTCIIFAFL. At 93–97 the chain is on the extracellular side; that stretch reads WNMTS. The N-linked (GlcNAc...) asparagine glycan is linked to Asn-94. Residues 98 to 118 traverse the membrane as a helical segment; sequence WVLDGHHSIAFLVLTFFLALV. The Cytoplasmic portion of the chain corresponds to 119-137; sequence DCTSSVTFLPFMSRLPTYY. The chain crosses the membrane as a helical span at residues 138-158; sequence LTTFFVGEGLSGLLPALVALA. Topologically, residues 159 to 220 are extracellular; that stretch reads QGSGLTTCVN…SRYLPAHFSP (62 aa). N-linked (GlcNAc...) asparagine glycosylation occurs at Asn-168. Residues 221–241 traverse the membrane as a helical segment; that stretch reads LVFFLLLSIMMACCLVAFFVL. The Cytoplasmic portion of the chain corresponds to 242-292; it reads QRQPRCWEASVEDLLNDQVTLHSIRPREENDLGPAGTVDSSQGQGYLEEKA. Ser-251 carries the post-translational modification Phosphoserine. A helical membrane pass occupies residues 293-313; the sequence is APCCPAHLAFIYTLVAFVNAL. The Extracellular segment spans residues 314 to 335; the sequence is TNGMLPSVQTYSCLSYGPVAYH. Residues 336–356 form a helical membrane-spanning segment; the sequence is LAATLSIVANPLASLVSMFLP. Topologically, residues 357–359 are cytoplasmic; sequence NRS. The helical transmembrane segment at 360–380 threads the bilayer; it reads LLFLGVLSVLGTCFGGYNMAM. Topologically, residues 381–396 are extracellular; it reads AVMSPCPLLQGHWGGE. An intrachain disulfide couples Cys-386 to Cys-463. The chain crosses the membrane as a helical span at residues 397–417; that stretch reads VLIVASWVLFSGCLSYVKVML. Over 418-427 the chain is Cytoplasmic; sequence GVVLRDLSRS. A helical transmembrane segment spans residues 428 to 448; that stretch reads ALLWCGAAVQLGSLLGALLMF. The Extracellular portion of the chain corresponds to 449–469; it reads PLVNVLRLFSSADFCNLHCPA.

It belongs to the riboflavin transporter family. Predominantly expressed in testis. Highly expressed in small intestine and prostate.

It is found in the apical cell membrane. Its subcellular location is the cell membrane. It localises to the nucleus membrane. The protein localises to the cytoplasm. The enzyme catalyses riboflavin(in) = riboflavin(out). With respect to regulation, activity is strongly inhibited by riboflavin analogs, such as lumiflavin, flavin mononucleotide (FMN), flavin adenine dinucleotide (FAD), by methylene blue, and to a lesser extent by amiloride. Riboflavin transport is Na(+)-independent at low pH but significantly reduced by Na(+) depletion under neutral pH conditions. In terms of biological role, plasma membrane transporter mediating the uptake by cells of the water soluble vitamin B2/riboflavin that plays a key role in biochemical oxidation-reduction reactions of the carbohydrate, lipid, and amino acid metabolism. Humans are unable to synthesize vitamin B2/riboflavin and must obtain it via intestinal absorption. The chain is Solute carrier family 52, riboflavin transporter, member 3 (SLC52A3) from Homo sapiens (Human).